We begin with the raw amino-acid sequence, 864 residues long: Putative Gly-rich membrane protein Bcell_0380 (864 aa).

A helical membrane pass occupies residues 7–27; that stretch reads ITFLAAFICIIFVIYAIYHSV. The segment at 372–399 is disordered; it reads TVENSFYDEDTTGQSDTGKGTPMSTADM. Positions 383–395 are enriched in polar residues; sequence TGQSDTGKGTPMS.

The protein resides in the cell membrane. In Evansella cellulosilytica (strain ATCC 21833 / DSM 2522 / FERM P-1141 / JCM 9156 / N-4) (Bacillus cellulosilyticus), this protein is Putative Gly-rich membrane protein Bcell_0380.